Here is a 203-residue protein sequence, read N- to C-terminus: High frequency lysogenization protein HflD homolog (203 aa).

This sequence belongs to the HflD family.

The protein resides in the cytoplasm. It localises to the cell inner membrane. The protein is High frequency lysogenization protein HflD homolog of Pasteurella multocida (strain Pm70).